A 180-amino-acid chain; its full sequence is Large ribosomal subunit protein bL19 (180 aa).

This sequence belongs to the bacterial ribosomal protein bL19 family.

This protein is located at the 30S-50S ribosomal subunit interface and may play a role in the structure and function of the aminoacyl-tRNA binding site. This is Large ribosomal subunit protein bL19 from Allorhizobium ampelinum (strain ATCC BAA-846 / DSM 112012 / S4) (Agrobacterium vitis (strain S4)).